The primary structure comprises 364 residues: MSLQSIKYSRGSLEILDQLLLPGQSKYLVVRGVEDGWKVINKMQVRGAPAIAIVGCLSLAVEINPEDFETKKSLRQEIEGKLNYLVSARPTAVNMKIAADELITLANDLYKDEAINVTEMKQRFLDATEAMLKKDIADNRAIGANGAKAILQRVAETGAAPAGSTGSVRVLTHCNTGSLATAGYGTALGVVRQLAELGKLEHVYCTETRPYNQGARLTAYELVHEKFPATLVLDSMVAALLRAKNVAAVVVGADRVASNGDTANKIGTYQIAVVAKHHDVPFYVAAPLTSIDLAIPGGDHIIIEERPDREMTHVGEHRIAAPGINCWNPAFDVTPASLITGIITERGVFKPAELKEAITKLLES.

The active-site Proton donor is the D254.

It belongs to the eIF-2B alpha/beta/delta subunits family. MtnA subfamily.

Its subcellular location is the cytoplasm. The protein localises to the nucleus. It carries out the reaction 5-(methylsulfanyl)-alpha-D-ribose 1-phosphate = 5-(methylsulfanyl)-D-ribulose 1-phosphate. It participates in amino-acid biosynthesis; L-methionine biosynthesis via salvage pathway; L-methionine from S-methyl-5-thio-alpha-D-ribose 1-phosphate: step 1/6. Its function is as follows. Catalyzes the interconversion of methylthioribose-1-phosphate (MTR-1-P) into methylthioribulose-1-phosphate (MTRu-1-P). The polypeptide is Methylthioribose-1-phosphate isomerase (Drosophila yakuba (Fruit fly)).